The following is a 215-amino-acid chain: Transmembrane emp24 domain-containing protein 11 (215 aa).

An N-terminal signal peptide occupies residues 1–17 (MQIQTILLCFSFSFSAA). The Lumenal portion of the chain corresponds to 18 to 167 (FYFHAGEREE…ILKEQDYQRD (150 aa)). Residues 27-125 (EKCIIEDIPS…KLRIHLDIRV (99 aa)) form the GOLD domain. Asn-105 carries an N-linked (GlcNAc...) asparagine glycan. A coiled-coil region spans residues 136 to 171 (QAKDKVNEVTFKLQHLIEQVEQILKEQDYQRDREEN). The helical transmembrane segment at 168–185 (REENFRITSEDTNRNVLW) threads the bilayer. The Cytoplasmic portion of the chain corresponds to 186-215 (WAFAQILIFISVGIFQMKHLKDFFIAKKLV). The short motif at 208-209 (FF) is the COPII vesicle coat-binding element. The COPI vesicle coat-binding motif lies at 208–215 (FFIAKKLV).

The protein belongs to the EMP24/GP25L family.

It is found in the endoplasmic reticulum membrane. In terms of biological role, part of a complex whose function is to bind Ca(2+) to the ER membrane and thereby regulate the retention of ER resident proteins. This Mus musculus (Mouse) protein is Transmembrane emp24 domain-containing protein 11 (Tmed11).